The primary structure comprises 339 residues: Ferredoxin--NADP reductase (339 aa).

Residues aspartate 32, glutamine 40, tyrosine 45, valine 85, phenylalanine 120, aspartate 287, and threonine 327 each coordinate FAD.

Belongs to the ferredoxin--NADP reductase type 2 family. As to quaternary structure, homodimer. It depends on FAD as a cofactor.

It carries out the reaction 2 reduced [2Fe-2S]-[ferredoxin] + NADP(+) + H(+) = 2 oxidized [2Fe-2S]-[ferredoxin] + NADPH. This is Ferredoxin--NADP reductase from Wolbachia sp. subsp. Brugia malayi (strain TRS).